The following is a 288-amino-acid chain: Acidic endochitinase SP2 (288 aa).

Residues 1–27 (MTLLLKNTLYLALIISVISSFPTSLFA) form the signal peptide. Gln-28 is modified (pyrrolidone carboxylic acid). The region spanning 28–63 (QNCGCAPNLCCSNFGFCGTGTPYCGVGNCQSGPCEG) is the Chitin-binding type-1 domain. 4 cysteine pairs are disulfide-bonded: Cys-30–Cys-38, Cys-32–Cys-44, Cys-37–Cys-51, and Cys-56–Cys-61. Positions 64–78 (GTPTTPTTPTTPTTP) are enriched in low complexity. Residues 64 to 84 (GTPTTPTTPTTPTTPGTGGGG) are disordered. The hinge region (Gly/Pro/Thr-rich) stretch occupies residues 64 to 85 (GTPTTPTTPTTPTTPGTGGGGS). 4-hydroxyproline is present on residues Pro-66, Pro-69, Pro-72, and Pro-75. 4 tandem repeats follow at residues 67–69 (TTP), 70–72 (TTP), 73–75 (TTP), and 76–78 (TTP). A 4 X 3 AA tandem repeats of T-T-P region spans residues 67-78 (TTPTTPTTPTTP). The catalytic stretch occupies residues 86-288 (SVSDIVSQAF…GVAPGDNLTC (203 aa)). 3 disulfides stabilise this stretch: Cys-107–Cys-154, Cys-168–Cys-178, and Cys-256–Cys-288. Catalysis depends on Glu-149, which acts as the Proton donor.

This sequence belongs to the glycosyl hydrolase 19 family. Chitinase class I subfamily. Post-translationally, O-glycosylated on hydroxyprolines; contains xylose. In terms of tissue distribution, localized to infected area.

The protein localises to the secreted. It is found in the extracellular space. It catalyses the reaction Random endo-hydrolysis of N-acetyl-beta-D-glucosaminide (1-&gt;4)-beta-linkages in chitin and chitodextrins.. In terms of biological role, defense against chitin-containing fungal pathogens. In Beta vulgaris (Sugar beet), this protein is Acidic endochitinase SP2 (SP2).